A 969-amino-acid chain; its full sequence is Translation initiation factor IF-2 (969 aa).

The disordered stretch occupies residues 96–377 (KRDPAEPVRA…NSRNQHQDRR (282 aa)). 3 stretches are compositionally biased toward low complexity: residues 105-157 (AEPA…QAEP), 167-181 (AAPAQAVAEPVEPAK), and 216-252 (PSAPAESPKSAKAEPAAAPKTTAKPGEIRRAAAPAAP). The span at 253–264 (DRAREEARRAAE) shows a compositional bias: basic and acidic residues. The segment covering 357–366 (RAGGKGGRGG) has biased composition (gly residues). A tr-type G domain is found at 470–637 (PRAPVVTVMG…NVLLQAEILE (168 aa)). The segment at 479-486 (GHVDHGKT) is G1. 479 to 486 (GHVDHGKT) is a GTP binding site. The tract at residues 504-508 (GITQH) is G2. The interval 525–528 (DTPG) is G3. Residues 525 to 529 (DTPGH) and 579 to 582 (NKID) contribute to the GTP site. Residues 579 to 582 (NKID) form a G4 region. The tract at residues 615–617 (SAK) is G5.

It belongs to the TRAFAC class translation factor GTPase superfamily. Classic translation factor GTPase family. IF-2 subfamily.

The protein localises to the cytoplasm. One of the essential components for the initiation of protein synthesis. Protects formylmethionyl-tRNA from spontaneous hydrolysis and promotes its binding to the 30S ribosomal subunits. Also involved in the hydrolysis of GTP during the formation of the 70S ribosomal complex. In Bordetella parapertussis (strain 12822 / ATCC BAA-587 / NCTC 13253), this protein is Translation initiation factor IF-2.